The following is a 372-amino-acid chain: Dof zinc finger protein DOF5.6 (372 aa).

A Dof-type zinc finger spans residues 73-127 (QKCPRCESTHTKFCYYNNYSLSQPRYFCKTCRRYWTKGGTLRNIPVGGGCRKNKK). The Zn(2+) site is built by C75, C78, C100, and C103. The disordered stretch occupies residues 117 to 146 (PVGGGCRKNKKPSSSNSSSSTSSGKKPSNI). Residues 128–145 (PSSSNSSSSTSSGKKPSN) are compositionally biased toward low complexity.

As to expression, the PEAR proteins (e.g. DOF2.4, DOF5.1, DOF3.2, DOF1.1, DOF5.6 and DOF5.3) form a short-range concentration gradient that peaks at protophloem sieve elements (PSE). Preferentially expressed in the vasculature of all organs, including seedlings, roots, stems, buds, leaves, flowers and siliques, and particularly in the cambium, phloem and interfascicular parenchyma cells of inflorescence stems.

It is found in the nucleus. In terms of biological role, transcription factor that binds specifically to a 5'-AA[AG]G-3' consensus core sequence. Promotes expression. The PEAR proteins (e.g. DOF2.4, DOF5.1, DOF3.2, DOF1.1, DOF5.6 and DOF5.3) activate gene expression that promotes radial growth of protophloem sieve elements. Involved in the regulation of interfascicular cambium formation and vascular tissue development, particularly at a very early stage during inflorescence stem development; promotes both cambium activity and phloem specification, but prevents xylem specification. The protein is Dof zinc finger protein DOF5.6 of Arabidopsis thaliana (Mouse-ear cress).